A 156-amino-acid polypeptide reads, in one-letter code: 6,7-dimethyl-8-ribityllumazine synthase (156 aa).

5-amino-6-(D-ribitylamino)uracil-binding positions include Phe-22, 57 to 59, and 81 to 83; these read AYE and TVI. Residue 86–87 participates in (2S)-2-hydroxy-3-oxobutyl phosphate binding; the sequence is GT. The active-site Proton donor is His-89. Phe-114 is a binding site for 5-amino-6-(D-ribitylamino)uracil. Arg-128 is a binding site for (2S)-2-hydroxy-3-oxobutyl phosphate.

Belongs to the DMRL synthase family. As to quaternary structure, forms an icosahedral capsid composed of 60 subunits, arranged as a dodecamer of pentamers.

It carries out the reaction (2S)-2-hydroxy-3-oxobutyl phosphate + 5-amino-6-(D-ribitylamino)uracil = 6,7-dimethyl-8-(1-D-ribityl)lumazine + phosphate + 2 H2O + H(+). It participates in cofactor biosynthesis; riboflavin biosynthesis; riboflavin from 2-hydroxy-3-oxobutyl phosphate and 5-amino-6-(D-ribitylamino)uracil: step 1/2. Catalyzes the formation of 6,7-dimethyl-8-ribityllumazine by condensation of 5-amino-6-(D-ribitylamino)uracil with 3,4-dihydroxy-2-butanone 4-phosphate. This is the penultimate step in the biosynthesis of riboflavin. In Edwardsiella ictaluri (strain 93-146), this protein is 6,7-dimethyl-8-ribityllumazine synthase.